Here is a 71-residue protein sequence, read N- to C-terminus: Sec-independent protein translocase protein TatA (71 aa).

The chain crosses the membrane as a helical span at residues 1–21 (MGSFSMWHWLIVLAIVLLLFG). Residues 40 to 71 (KKGMSDDDTAPDGTPKPADQSKTVDHRADDHK) are disordered. Positions 61–71 (KTVDHRADDHK) are enriched in basic and acidic residues.

Belongs to the TatA/E family. The Tat system comprises two distinct complexes: a TatABC complex, containing multiple copies of TatA, TatB and TatC subunits, and a separate TatA complex, containing only TatA subunits. Substrates initially bind to the TatABC complex, which probably triggers association of the separate TatA complex to form the active translocon.

Its subcellular location is the cell inner membrane. Part of the twin-arginine translocation (Tat) system that transports large folded proteins containing a characteristic twin-arginine motif in their signal peptide across membranes. TatA could form the protein-conducting channel of the Tat system. The protein is Sec-independent protein translocase protein TatA of Allorhizobium ampelinum (strain ATCC BAA-846 / DSM 112012 / S4) (Agrobacterium vitis (strain S4)).